The sequence spans 586 residues: MGSCWSDGSYAGGGMVGVGGGANSSAATPNDAVDYYLKSRGYNGLFSQIELSFSASNLRDRDVISKSDAMVVVYTKGRDGTLAELFRSEVVLNSLNPKWIKNFTIGYQFEIVQTLLFRVYDIDTQFQNSKEELLKLDEQQFLGEATCTLSEVVTKSNRTIALELMRKEGVAAQTQPQHNGKLIVHAEESLASKTNTEIVFRGLNLESKDTFSKSDPFLVISKIVEHGTPIPVSKTEVLKNDPNPLWKPVSLSVQQVGSKDSPLVIECLDFNGNGNHDLIGKVQKSLSDLEKLHLAGQGINLALPTGVGHKHEDRVLKSQLFVDKFTETVQHTFLEYLASGFELNFMVAIDFTASNGNPRLPDSLHYIDPTGRLNAYQRAIVEVGEVLQFYDSDKRFPAWGFGARPIDIPVSHCFNLNGSSTYCEVDGIQGIMNAYNGALFNVSFAGPTLFGPVINAAATIASDSLAQSAKKYYVLLIITDGVITDLQETRDSIVSASDLPLSILIVGVGGADYKEMEVLDGDKGEKLESSSGRIASRDIVQFVALRDIQYGEVSVVEALLAELPTQFLTYMRNRNITPTTTTPSST.

The N-myristoyl glycine moiety is linked to residue Gly-2. C2 domains are found at residues 25 to 164 and 176 to 303; these read SAAT…ALEL and PQHN…NLAL. Ca(2+) contacts are provided by Asp-62, Asp-68, Asp-121, and Asp-123. The 220-residue stretch at 344–563 folds into the VWFA domain; it reads NFMVAIDFTA…SVVEALLAEL (220 aa).

Belongs to the copine family. In terms of assembly, interacts with BAP1 and BAP2. Ca(2+) serves as cofactor. As to expression, expressed in roots, leaves and stems. Expressed in young growing tissues.

It is found in the cell membrane. Negative regulator of cell death and defense responses. May repress a number of R genes and may have effects in promoting growth and development. May function in membrane trafficking and in fusion of vesicles with plasma membrane. The polypeptide is Protein BONZAI 2 (BON2) (Arabidopsis thaliana (Mouse-ear cress)).